Consider the following 568-residue polypeptide: Proline--tRNA ligase (568 aa).

This sequence belongs to the class-II aminoacyl-tRNA synthetase family. ProS type 1 subfamily. As to quaternary structure, homodimer.

It localises to the cytoplasm. The catalysed reaction is tRNA(Pro) + L-proline + ATP = L-prolyl-tRNA(Pro) + AMP + diphosphate. In terms of biological role, catalyzes the attachment of proline to tRNA(Pro) in a two-step reaction: proline is first activated by ATP to form Pro-AMP and then transferred to the acceptor end of tRNA(Pro). As ProRS can inadvertently accommodate and process non-cognate amino acids such as alanine and cysteine, to avoid such errors it has two additional distinct editing activities against alanine. One activity is designated as 'pretransfer' editing and involves the tRNA(Pro)-independent hydrolysis of activated Ala-AMP. The other activity is designated 'posttransfer' editing and involves deacylation of mischarged Ala-tRNA(Pro). The misacylated Cys-tRNA(Pro) is not edited by ProRS. The protein is Proline--tRNA ligase of Aliarcobacter butzleri (strain RM4018) (Arcobacter butzleri).